Consider the following 153-residue polypeptide: Insulin-like growth factor 1 (153 aa).

The tract at residues 49 to 77 (GPETLCGAELVDALQFVCGDRGFYFNKPT) is b. Intrachain disulfides connect cysteine 54-cysteine 96, cysteine 66-cysteine 109, and cysteine 95-cysteine 100. The tract at residues 78–89 (GYGSSSRRAPQT) is c. The segment at 90–110 (GIVDECCFRSCDLRRLEMYCA) is a. Residues 111 to 118 (PLKPAKSA) form a d region. A propeptide spans 119 to 153 (RSVRAQRHTDMPKAQKEVHLKNASRGSAGNKNYRM) (e peptide). The tract at residues 120 to 153 (SVRAQRHTDMPKAQKEVHLKNASRGSAGNKNYRM) is disordered. The span at 125–138 (RHTDMPKAQKEVHL) shows a compositional bias: basic and acidic residues. Over residues 142–153 (SRGSAGNKNYRM) the composition is skewed to polar residues.

It belongs to the insulin family. In terms of assembly, forms a ternary complex with IGFR1 and ITGAV:ITGB3. Forms a ternary complex with IGFR1 and ITGA6:ITGB4. Forms a ternary complex with IGFBP3 and ALS.

It localises to the secreted. Its function is as follows. The insulin-like growth factors, isolated from plasma, are structurally and functionally related to insulin but have a much higher growth-promoting activity. May be a physiological regulator of [1-14C]-2-deoxy-D-glucose (2DG) transport and glycogen synthesis in osteoblasts. Stimulates glucose transport in bone-derived osteoblastic (PyMS) cells and is effective at much lower concentrations than insulin, not only regarding glycogen and DNA synthesis but also with regard to enhancing glucose uptake. May play a role in synapse maturation. Ca(2+)-dependent exocytosis of IGF1 is required for sensory perception of smell in the olfactory bulb. Acts as a ligand for IGF1R. Binds to the alpha subunit of IGF1R, leading to the activation of the intrinsic tyrosine kinase activity which autophosphorylates tyrosine residues in the beta subunit thus initiating a cascade of down-stream signaling events leading to activation of the PI3K-AKT/PKB and the Ras-MAPK pathways. Binds to integrins ITGAV:ITGB3 and ITGA6:ITGB4. Its binding to integrins and subsequent ternary complex formation with integrins and IGFR1 are essential for IGF1 signaling. Induces the phosphorylation and activation of IGFR1, MAPK3/ERK1, MAPK1/ERK2 and AKT1. As part of the MAPK/ERK signaling pathway, acts as a negative regulator of apoptosis in cardiomyocytes via promotion of STUB1/CHIP-mediated ubiquitination and degradation of ICER-type isoforms of CREM. The sequence is that of Insulin-like growth factor 1 from Panthera tigris altaica (Siberian tiger).